The sequence spans 464 residues: MRLVVIGVNHKTAPVALRERLALVGDEVSIALAQLQGFSDGSVIVSTCNRTEIYALVPESILSPHTLLPNSASAVVETSVIESSMTANNSANLSSTIISAHILKIKTWLAGFKQLSLDEIDPYLYVHRNTHALTHWLRVAAGLDSMILGEPQILGQIKRAVHMAQDQKALSNQLGWIVDQVFAAAKRVRNETQVGAQAVSLSYAAAKLVTQIFDDLPSRTLLVVAAGEMNRLVATHIAGLGVGRVIICNRNPERAEALAAELRNPNRRIEVRTLQELPQVLAEADIVSSCSGSMDILIDKTMTLRALKSRRYQPMLMIDLAVPRDIDSTVSRIDDVYLYSVDDLQHVIAGNIEQRRQAAVDAELLVSQLVVEMDRRFQVRQVGKDIQQYRTRTHEQVNKLLQASIAELHGDSANPEDIMIELTRRLTQNLTHAPSKLMRKAAREGDNELLDFVVSGLQDAHRNH.

Substrate-binding positions include 47 to 50, Ser-145, 150 to 152, and Gln-156; these read TCNR and EPQ. Residue Cys-48 is the Nucleophile of the active site. 225-230 contributes to the NADP(+) binding site; the sequence is AAGEMN.

The protein belongs to the glutamyl-tRNA reductase family. Homodimer.

The catalysed reaction is (S)-4-amino-5-oxopentanoate + tRNA(Glu) + NADP(+) = L-glutamyl-tRNA(Glu) + NADPH + H(+). It participates in porphyrin-containing compound metabolism; protoporphyrin-IX biosynthesis; 5-aminolevulinate from L-glutamyl-tRNA(Glu): step 1/2. Catalyzes the NADPH-dependent reduction of glutamyl-tRNA(Glu) to glutamate 1-semialdehyde (GSA). This Psychrobacter cryohalolentis (strain ATCC BAA-1226 / DSM 17306 / VKM B-2378 / K5) protein is Glutamyl-tRNA reductase.